Consider the following 716-residue polypeptide: Phosphoribosylformylglycinamidine synthase subunit PurL (716 aa).

His33 is an active-site residue. Tyr36 contacts ATP. Glu77 serves as a coordination point for Mg(2+). Residues 78–81 and Arg100 contribute to the substrate site; that span reads SHNH. The active-site Proton acceptor is the His79. Position 101 (Asp101) interacts with Mg(2+). A substrate-binding site is contributed by Gln225. Asp253 contacts Mg(2+). 297–299 is a substrate binding site; sequence ESQ. ATP-binding residues include Asn475 and Gly512. Asn513 lines the Mg(2+) pocket. Ser515 is a binding site for substrate.

Belongs to the FGAMS family. Monomer. Part of the FGAM synthase complex composed of 1 PurL, 1 PurQ and 2 PurS subunits.

It is found in the cytoplasm. It catalyses the reaction N(2)-formyl-N(1)-(5-phospho-beta-D-ribosyl)glycinamide + L-glutamine + ATP + H2O = 2-formamido-N(1)-(5-O-phospho-beta-D-ribosyl)acetamidine + L-glutamate + ADP + phosphate + H(+). It functions in the pathway purine metabolism; IMP biosynthesis via de novo pathway; 5-amino-1-(5-phospho-D-ribosyl)imidazole from N(2)-formyl-N(1)-(5-phospho-D-ribosyl)glycinamide: step 1/2. Its function is as follows. Part of the phosphoribosylformylglycinamidine synthase complex involved in the purines biosynthetic pathway. Catalyzes the ATP-dependent conversion of formylglycinamide ribonucleotide (FGAR) and glutamine to yield formylglycinamidine ribonucleotide (FGAM) and glutamate. The FGAM synthase complex is composed of three subunits. PurQ produces an ammonia molecule by converting glutamine to glutamate. PurL transfers the ammonia molecule to FGAR to form FGAM in an ATP-dependent manner. PurS interacts with PurQ and PurL and is thought to assist in the transfer of the ammonia molecule from PurQ to PurL. The chain is Phosphoribosylformylglycinamidine synthase subunit PurL from Methanosarcina mazei (strain ATCC BAA-159 / DSM 3647 / Goe1 / Go1 / JCM 11833 / OCM 88) (Methanosarcina frisia).